Consider the following 83-residue polypeptide: EMBRYO SURROUNDING FACTOR 1.1 (83 aa).

The first 22 residues, Met-1–Cys-22, serve as a signal peptide directing secretion. Cystine bridges form between Cys-41–Cys-56, Cys-46–Cys-75, Cys-54–Cys-71, and Cys-57–Cys-64.

It belongs to the MEG family. As to expression, expressed exclusively in ovule embryo sacs and in early developing endosperms.

Maternally-contributed central cell peptide regulating suspensor development and correct auxin distribution in early developing embryos. This Arabidopsis thaliana (Mouse-ear cress) protein is EMBRYO SURROUNDING FACTOR 1.1 (ESF1.1).